The sequence spans 255 residues: MTAAASDPHNPRSSADDTASPRCESGQGSFFGRRKGHKLRPHQNGLIEHLLPRLSLDPGASGPSDPATLFGRPVKEMRIEIGFGGGEHLVAEALAFPRTGFIGCEPYVNGMAKILSQIEAHDIGNIRLLAGDASELLAWLPRASLARIDLIHPDPWPKRRHWKRRFVQDATVAEMARVLRPGGEFRFVSDIADYCAWTLSHLARSPGFLWLAERATDWHNPWPDYTMTRYGRKAEREGRRAAYLRFRRESDAAQA.

Positions 1–37 (MTAAASDPHNPRSSADDTASPRCESGQGSFFGRRKGH) are disordered. Glutamate 80, glutamate 105, aspartate 132, and aspartate 154 together coordinate S-adenosyl-L-methionine. Aspartate 154 is a catalytic residue. Residues lysine 158 and aspartate 190 each contribute to the substrate site.

The protein belongs to the class I-like SAM-binding methyltransferase superfamily. TrmB family.

It catalyses the reaction guanosine(46) in tRNA + S-adenosyl-L-methionine = N(7)-methylguanosine(46) in tRNA + S-adenosyl-L-homocysteine. The protein operates within tRNA modification; N(7)-methylguanine-tRNA biosynthesis. In terms of biological role, catalyzes the formation of N(7)-methylguanine at position 46 (m7G46) in tRNA. This is tRNA (guanine-N(7)-)-methyltransferase from Nitrobacter hamburgensis (strain DSM 10229 / NCIMB 13809 / X14).